Here is an 838-residue protein sequence, read N- to C-terminus: Envelope glycoprotein H (838 aa).

A signal peptide spans Met1–Gly18. Topologically, residues Gln19–Pro803 are virion surface. N-linked (GlcNAc...) asparagine; by host glycans are attached at residues Asn73 and Asn120. The tract at residues Phe174 to His204 is disordered. The N-linked (GlcNAc...) asparagine; by host glycan is linked to Asn216. An interaction with gL region spans residues Asp259–Val323. Residues Asn332, Asn437, Asn670, and Asn784 are each glycosylated (N-linked (GlcNAc...) asparagine; by host). The chain crosses the membrane as a helical span at residues Gly804–Leu824. Residues Lys825–Glu838 lie on the Intravirion side of the membrane.

The protein belongs to the herpesviridae glycoprotein H family. In terms of assembly, interacts with glycoprotein L (gL); this interaction is necessary for the correct processing and cell surface expression of gH. The heterodimer gH/gL seems to interact with gB trimers during fusion. Associates with the gB-gH/gL-gD complex. Interacts with VP16. N-glycosylated, O-glycosylated, and sialylated.

It is found in the virion membrane. Its subcellular location is the host cell membrane. It localises to the host endosome membrane. Its function is as follows. The heterodimer glycoprotein H-glycoprotein L is required for the fusion of viral and plasma membranes leading to virus entry into the host cell. Following initial binding to host receptor, membrane fusion is mediated by the fusion machinery composed of gB and the heterodimer gH/gL. May also be involved in the fusion between the virion envelope and the outer nuclear membrane during virion morphogenesis. The chain is Envelope glycoprotein H from Human herpesvirus 1 (strain 17) (HHV-1).